The chain runs to 294 residues: MSDRLIKAVAKDGQVRIIVADTRELVNKGIKIHNCAPTAAAALGRMLTAGVIMGSMLKSDKDVITLKIDGGGEAKGVTVTSYANANVKGYIGNPSVDLEANALGKLDVGGAIGKNGSLLVIRDFGLKEPYVGNVPIYTGEVGDDIAYYFTVSEQTPTAVGLGVLVDKDLSIRKAGGVIIQMMPGADEMLADLITYRLQDLGSITSFLDSGKTIDDMLNFLFDDMDLKILEEMTPEYSCDCSREKIERALISIGEKDLKEIYNDGKTEEIVCQFCGEHYKFTNEEIGELLKNVRK.

Intrachain disulfides connect cysteine 238–cysteine 240 and cysteine 271–cysteine 274.

The protein belongs to the HSP33 family. In terms of processing, under oxidizing conditions two disulfide bonds are formed involving the reactive cysteines. Under reducing conditions zinc is bound to the reactive cysteines and the protein is inactive.

It localises to the cytoplasm. Redox regulated molecular chaperone. Protects both thermally unfolding and oxidatively damaged proteins from irreversible aggregation. Plays an important role in the bacterial defense system toward oxidative stress. This Clostridium novyi (strain NT) protein is 33 kDa chaperonin.